Consider the following 719-residue polypeptide: Lanosterol synthase (719 aa).

One copy of the PFTB 1 repeat lies at 118 to 160; it reads RIEVIRYLVNHANPEDGGWGIHIEGKSTVFGTALNYVVLRILG. The active-site Proton donor is aspartate 451. PFTB repeat units lie at residues 478-523, 555-595, and 604-645; these read LKDS…MIEH, VKNA…SCVK, and SRRA…VVQT.

The protein belongs to the terpene cyclase/mutase family.

It catalyses the reaction (S)-2,3-epoxysqualene = lanosterol. Its pathway is terpene metabolism; lanosterol biosynthesis; lanosterol from farnesyl diphosphate: step 3/3. Functionally, catalyzes the cyclization of (S)-2,3 oxidosqualene to lanosterol, a reaction that forms the sterol nucleus. The chain is Lanosterol synthase (ERG7) from Pneumocystis carinii.